The primary structure comprises 320 residues: Ribose-phosphate pyrophosphokinase (320 aa).

Residue 41–43 (NDN) participates in ATP binding. Mg(2+) contacts are provided by histidine 134 and aspartate 175. The active site involves lysine 198. D-ribose 5-phosphate-binding residues include arginine 200 and aspartate 224.

This sequence belongs to the ribose-phosphate pyrophosphokinase family. Class I subfamily. In terms of assembly, homohexamer. Requires Mg(2+) as cofactor.

It is found in the cytoplasm. The enzyme catalyses D-ribose 5-phosphate + ATP = 5-phospho-alpha-D-ribose 1-diphosphate + AMP + H(+). The protein operates within metabolic intermediate biosynthesis; 5-phospho-alpha-D-ribose 1-diphosphate biosynthesis; 5-phospho-alpha-D-ribose 1-diphosphate from D-ribose 5-phosphate (route I): step 1/1. Functionally, involved in the biosynthesis of the central metabolite phospho-alpha-D-ribosyl-1-pyrophosphate (PRPP) via the transfer of pyrophosphoryl group from ATP to 1-hydroxyl of ribose-5-phosphate (Rib-5-P). This Deinococcus radiodurans (strain ATCC 13939 / DSM 20539 / JCM 16871 / CCUG 27074 / LMG 4051 / NBRC 15346 / NCIMB 9279 / VKM B-1422 / R1) protein is Ribose-phosphate pyrophosphokinase.